A 295-amino-acid chain; its full sequence is Geranylfarnesyl diphosphate synthase (295 aa).

Lys-51, Arg-54, and His-83 together coordinate isopentenyl diphosphate. Residues Asp-90 and Asp-94 each coordinate Mg(2+). An all-trans-polyprenyl diphosphate is bound at residue Arg-99. Arg-100 provides a ligand contact to isopentenyl diphosphate. An all-trans-polyprenyl diphosphate-binding residues include Lys-174, Thr-175, and Gln-212.

Belongs to the FPP/GGPP synthase family. As to quaternary structure, homodimer. Requires Mg(2+) as cofactor.

The enzyme catalyses isopentenyl diphosphate + (2E,6E,10E)-geranylgeranyl diphosphate = (2E,6E,10E,14E)-geranylfarnesyl diphosphate + diphosphate. In terms of biological role, involved in biosynthesis of the polyprenyl side-chain of methanophenazine, an electron carrier utilized for methanogenesis. Catalyzes the condensation of isopentenyl pyrophosphate with the allylic pyrophosphates to yield geranylfarnesyl diphosphate (GFPP). It prefers geranylgeranyl diphosphate (GGPP) and farnesyl diphosphate (FPP) as allylic substrate. The protein is Geranylfarnesyl diphosphate synthase of Methanosarcina mazei (strain ATCC BAA-159 / DSM 3647 / Goe1 / Go1 / JCM 11833 / OCM 88) (Methanosarcina frisia).